Reading from the N-terminus, the 492-residue chain is Ribose import ATP-binding protein RbsA (492 aa).

2 ABC transporter domains span residues 3–239 (IDMR…VGRK) and 238–492 (RKLE…TGGK). ATP is bound at residue 35–42 (GENGAGKS).

It belongs to the ABC transporter superfamily. Ribose importer (TC 3.A.1.2.1) family. The complex is composed of an ATP-binding protein (RbsA), two transmembrane proteins (RbsC) and a solute-binding protein (RbsB).

The protein localises to the cell membrane. The catalysed reaction is D-ribose(out) + ATP + H2O = D-ribose(in) + ADP + phosphate + H(+). Part of the ABC transporter complex RbsABC involved in ribose import. Responsible for energy coupling to the transport system. In Streptococcus agalactiae serotype III (strain NEM316), this protein is Ribose import ATP-binding protein RbsA.